The chain runs to 201 residues: Small ribosomal subunit protein uS4 (201 aa).

The tract at residues 22–47 (TGKELARRPYAPGDHGNDRRGKLSEY) is disordered. The 61-residue stretch at 93 to 153 (RRLDNMVYRL…EKSKNLDVIK (61 aa)) folds into the S4 RNA-binding domain.

The protein belongs to the universal ribosomal protein uS4 family. As to quaternary structure, part of the 30S ribosomal subunit. Contacts protein S5. The interaction surface between S4 and S5 is involved in control of translational fidelity.

Functionally, one of the primary rRNA binding proteins, it binds directly to 16S rRNA where it nucleates assembly of the body of the 30S subunit. In terms of biological role, with S5 and S12 plays an important role in translational accuracy. In Limosilactobacillus fermentum (strain NBRC 3956 / LMG 18251) (Lactobacillus fermentum), this protein is Small ribosomal subunit protein uS4.